A 180-amino-acid polypeptide reads, in one-letter code: ATP synthase subunit b (180 aa).

A helical transmembrane segment spans residues 26–46; the sequence is IPLMLATLAALVISIFFLTYF.

This sequence belongs to the ATPase B chain family. As to quaternary structure, F-type ATPases have 2 components, F(1) - the catalytic core - and F(0) - the membrane proton channel. F(1) has five subunits: alpha(3), beta(3), gamma(1), delta(1), epsilon(1). F(0) has three main subunits: a(1), b(2) and c(10-14). The alpha and beta chains form an alternating ring which encloses part of the gamma chain. F(1) is attached to F(0) by a central stalk formed by the gamma and epsilon chains, while a peripheral stalk is formed by the delta and b chains.

The protein resides in the cell membrane. Its function is as follows. F(1)F(0) ATP synthase produces ATP from ADP in the presence of a proton or sodium gradient. F-type ATPases consist of two structural domains, F(1) containing the extramembraneous catalytic core and F(0) containing the membrane proton channel, linked together by a central stalk and a peripheral stalk. During catalysis, ATP synthesis in the catalytic domain of F(1) is coupled via a rotary mechanism of the central stalk subunits to proton translocation. Component of the F(0) channel, it forms part of the peripheral stalk, linking F(1) to F(0). The polypeptide is ATP synthase subunit b (Mycoplasmopsis pulmonis (strain UAB CTIP) (Mycoplasma pulmonis)).